Here is a 641-residue protein sequence, read N- to C-terminus: MMSHSPSMPCSALFLLLLLLLPPTFKGGSLRYHGPGWKLFHRLSKGFRSSHQRQTQQMRQNVPQGQSGDDCQGIFDLYLVLDKSGSVADNWIHIYSFAEGLVKKFTNPNLRISIITYSTEAEVILPLTSDSKEINKSLLVLKNIVPQGLTHMQKGLRKANEQIRKSTLGGRIVNSVIIALTDGLLLLKPYLDTMEEAKKARRMGAIVYTVGVFMYSKQQLVNIAGDPDRCFGVDEGFSALEGVVDPLTSKSCTEILSVQPTYVCAKDFYQVNISGHGLNNTSNMKQVICRFKFSDSKVVDESPSDMNEHSITCPGPKIKHTGEDVSLQVSLNNGISFIGNKLIITSTNCWSPRASQGIVFKRTWLMFLPVLLVTLLLLCCTWKLCIKPKKLPPPPPKPEKEPEEESPPPSSPPAPGRGPGPGPSAGPGPGPGPSPGSGPARSPVPARPPPAPLPANTNPTVIVACCGCGNRGMQGNLDTCCDYFHPSCHPMPLVWCHPKAQGGYPGFAVMKPSCSQASCRQKHCLCSNRDCFHLAEPPYPTRIVFQPNEKYFSITQSHYSPKIRFQTNQESLPVAQTLCSKMCSPPNQECYTFKSPQSPYQARYTKSPARMLPLLPPHTRQSLESLCHTYPFPPISKGPKF.

The first 27 residues, 1–27 (MMSHSPSMPCSALFLLLLLLLPPTFKG), serve as a signal peptide directing secretion. The Extracellular segment spans residues 28 to 363 (GSLRYHGPGW…ASQGIVFKRT (336 aa)). One can recognise a VWFA domain in the interval 76–247 (DLYLVLDKSG…SALEGVVDPL (172 aa)). Residues serine 84, serine 86, and threonine 150 each coordinate a divalent metal cation. The chain crosses the membrane as a helical span at residues 364 to 384 (WLMFLPVLLVTLLLLCCTWKL). Residues 385–641 (CIKPKKLPPP…FPPISKGPKF (257 aa)) lie on the Cytoplasmic side of the membrane. The interval 391 to 455 (LPPPPPKPEK…ARPPPAPLPA (65 aa)) is disordered. The segment covering 407-436 (PPPSSPPAPGRGPGPGPSAGPGPGPGPSPG) has biased composition (pro residues).

The protein belongs to the ATR family.

It localises to the membrane. This chain is Anthrax toxin receptor-like (Antxrl), found in Mus musculus (Mouse).